The following is a 323-amino-acid chain: tRNA-dihydrouridine(16) synthase (323 aa).

Residues 7–9 (PME) and Gln68 contribute to the FMN site. The Proton donor role is filled by Cys98. FMN is bound by residues Lys139, 200–202 (NGE), and 224–225 (CR).

It belongs to the Dus family. DusC subfamily. Requires FMN as cofactor.

The enzyme catalyses 5,6-dihydrouridine(16) in tRNA + NADP(+) = uridine(16) in tRNA + NADPH + H(+). It catalyses the reaction 5,6-dihydrouridine(16) in tRNA + NAD(+) = uridine(16) in tRNA + NADH + H(+). In terms of biological role, catalyzes the synthesis of 5,6-dihydrouridine (D), a modified base found in the D-loop of most tRNAs, via the reduction of the C5-C6 double bond in target uridines. Specifically modifies U16 in tRNAs. This Vibrio cholerae serotype O1 (strain ATCC 39315 / El Tor Inaba N16961) protein is tRNA-dihydrouridine(16) synthase.